The sequence spans 215 residues: Pyrrolidone-carboxylate peptidase (215 aa).

Active-site residues include E80, C143, and H167.

This sequence belongs to the peptidase C15 family. In terms of assembly, homotetramer.

It localises to the cytoplasm. The catalysed reaction is Release of an N-terminal pyroglutamyl group from a polypeptide, the second amino acid generally not being Pro.. In terms of biological role, removes 5-oxoproline from various penultimate amino acid residues except L-proline. The protein is Pyrrolidone-carboxylate peptidase of Yersinia pseudotuberculosis serotype O:1b (strain IP 31758).